A 365-amino-acid chain; its full sequence is MNLAAMDPSNYDAQLAEKKRKLSEGFAEFAPPELEVFASEPAHYRMRAEFRVWHEGDDLYYYMFDKVLDAKVRCEQYLPASTLINAIMTSLVEELRPNHSLRHRLFQVDFLSTLSGEILVSLLYHRQLDEQWQVEAAALKQRLSSQFNVNIIGRARKQKIDLDKDFVVETIKVNGQDLHYKQIENSFTQPNAKVSIKMLEWAIDATKQSQGDLLELYCGNGNFTIALAQNFNRVLATELAKPSVGAAQYNIAINNVDNVQIIRMSAEDFSDAMAKKRSFRRLEGIDLDSYNCNTIFVDPPRAGIDDETLKLIQGYERILYISCNPETLKDNLQTLSSSHKITRFALFDQFPYTHHMESGVLLERK.

Positions 189, 217, 222, 238, and 298 each coordinate S-adenosyl-L-methionine. Residue cysteine 323 is the Nucleophile of the active site. Glutamate 357 serves as the catalytic Proton acceptor.

It belongs to the class I-like SAM-binding methyltransferase superfamily. RNA M5U methyltransferase family. TrmA subfamily.

It catalyses the reaction uridine(54) in tRNA + S-adenosyl-L-methionine = 5-methyluridine(54) in tRNA + S-adenosyl-L-homocysteine + H(+). The enzyme catalyses uridine(341) in tmRNA + S-adenosyl-L-methionine = 5-methyluridine(341) in tmRNA + S-adenosyl-L-homocysteine + H(+). In terms of biological role, dual-specificity methyltransferase that catalyzes the formation of 5-methyluridine at position 54 (m5U54) in all tRNAs, and that of position 341 (m5U341) in tmRNA (transfer-mRNA). The polypeptide is tRNA/tmRNA (uracil-C(5))-methyltransferase (Shewanella denitrificans (strain OS217 / ATCC BAA-1090 / DSM 15013)).